The following is a 1325-amino-acid chain: MNRIYRVIWNCTLQVFQACSELTRRAGKTSTVNLRKSSGLTTKFSRLTLGVLLALSGSASGASLEVDNDQITNIDTDVAYDAYLVGWYGTGVLNILAGGNASLTTITTSVIGANEDSEGTVNVLGGTWRLYDSGNNARPLNVGQSGTGTLNIKQKGHVDGGYLRLGSSTGGVGTVNVEGEDSVLTTELFEIGSYGTGSLNITDKGYVTSSIVAILGYQAGSNGQVVVEKGGEWLIKNNDSSIEFQIGNQGTGEATIREGGLVTAENTIIGGNATGIGTLNVQDQDSVITVRRLYNGYFGNGTVNISNNGLINNKEYSLVGVQDGSHGVVNVTDKGHWNFLGTGEAFRYIYIGDAGDGELNVSSEGKVDSGIITAGMKETGTGNITVKDKNSVITNLGTNLGYDGHGEMNISNQGLVVSNGGSSLGYGETGVGNVSITTGGMWEVNKNVYTTIGVAGVGNLNISDGGKFVSQNITFLGDKASGIGTLNLMDATSSFDTVGINVGNFGSGIVNVSNGATLNSTGYGFIGGNASGKGIVNISTDSLWNLKTSSTNAQLLQVGVLGTGELNITTGGIVKARDTQIALNDKSKGDVRVDGQNSLLETFNMYVGTSGTGTLTLTNNGTLNVEGGEVYLGVFEPAVGTLNIGAAHGEAAADAGFITNATKVEFGLGEGVFVFNHTNNSDAGYQVDMLITGDDKDGKVIHDAGHTVFNAGNTYSGKTLVNDGLLTIASHTADGVTGMGSSEVTIANPGTLDILASTNSAGDYTLTNALKGDGLMRVQLSSSDKMFGFTHATGTEFAGVAQLKDSTFTLERDNTAALTHAMLQSDSENTTSVKVGEQSIGGLAMNGGTIIFDTDIPAATLAEGYISVDTLVVGAGDYTWKGRNYQVNGTGDVLIDVPKPWNDPMANNPLTTLNLLEHDDSHVGVQLVKAQTVIGSGGSLTLRDLQGDEVEADKTLHIAQNGTVVAEGDYGFRLTTAPGNGLYVNYGLKALNIHGGQKLTLAEHGGAYGATADMSAKIGGEGDLAINTVRQVSLSNGQNDYQGATYVQMGTLRTDADGALGNTRELNISNAAIVDLNGSTQTVETFTGQMGSTVLFKEGALTVNKGGISQGELTGGGNLNVTGGTLAIEGLNARYNALTSISPNAEVSLDNTQGLGRGNIANDGLLTLKNVTGELRNSISGKGIVSATARTDVELDGDNSRFVGQFNIDTGSALSVNEQKNLGDASVINNGLLTISTERSWAMTHSISGSGDVTKLGTGILTLNNDSAAYQGTTDIVGGEIAFGSDSAINMASQHINIHNSGVMSGNVTTAGDMNVMPGGGTACR.

An N-terminal signal peptide occupies residues 1-18 (MNRIYRVIWNCTLQVFQA). Cysteine 19 is lipidated: N-palmitoyl cysteine. Residue cysteine 19 is the site of S-diacylglycerol cysteine attachment.

It to E.coli YfaL.

Its subcellular location is the cell membrane. This is an uncharacterized protein from Escherichia coli (strain K12).